Consider the following 252-residue polypeptide: 2-succinyl-6-hydroxy-2,4-cyclohexadiene-1-carboxylate synthase (252 aa).

The protein belongs to the AB hydrolase superfamily. MenH family. In terms of assembly, monomer.

The catalysed reaction is 5-enolpyruvoyl-6-hydroxy-2-succinyl-cyclohex-3-ene-1-carboxylate = (1R,6R)-6-hydroxy-2-succinyl-cyclohexa-2,4-diene-1-carboxylate + pyruvate. Its pathway is quinol/quinone metabolism; 1,4-dihydroxy-2-naphthoate biosynthesis; 1,4-dihydroxy-2-naphthoate from chorismate: step 3/7. It functions in the pathway quinol/quinone metabolism; menaquinone biosynthesis. Catalyzes a proton abstraction reaction that results in 2,5-elimination of pyruvate from 2-succinyl-5-enolpyruvyl-6-hydroxy-3-cyclohexene-1-carboxylate (SEPHCHC) and the formation of 2-succinyl-6-hydroxy-2,4-cyclohexadiene-1-carboxylate (SHCHC). In Salmonella typhi, this protein is 2-succinyl-6-hydroxy-2,4-cyclohexadiene-1-carboxylate synthase.